A 247-amino-acid chain; its full sequence is Adenosylcobinamide-GDP ribazoletransferase (247 aa).

5 helical membrane passes run 34–54, 59–79, 113–133, 138–158, and 194–214; these read IITFPLIGLLLGAISGLVFMV, CGAPLAALFSVLVLVLMTGGF, GGLALIFVVLAKILVLSELAL, ILASLAAACAVSRGTAALLMY, and VLLPGMHGVAAMVVTMVAIFI.

The protein belongs to the CobS family. It depends on Mg(2+) as a cofactor.

It localises to the cell inner membrane. It catalyses the reaction alpha-ribazole + adenosylcob(III)inamide-GDP = adenosylcob(III)alamin + GMP + H(+). It carries out the reaction alpha-ribazole 5'-phosphate + adenosylcob(III)inamide-GDP = adenosylcob(III)alamin 5'-phosphate + GMP + H(+). Its pathway is cofactor biosynthesis; adenosylcobalamin biosynthesis; adenosylcobalamin from cob(II)yrinate a,c-diamide: step 7/7. Functionally, joins adenosylcobinamide-GDP and alpha-ribazole to generate adenosylcobalamin (Ado-cobalamin). Also synthesizes adenosylcobalamin 5'-phosphate from adenosylcobinamide-GDP and alpha-ribazole 5'-phosphate. The polypeptide is Adenosylcobinamide-GDP ribazoletransferase (Escherichia coli O157:H7).